A 418-amino-acid polypeptide reads, in one-letter code: UDP-N-acetylglucosamine 1-carboxyvinyltransferase (418 aa).

Position 22–23 (Lys22–Asn23) interacts with phosphoenolpyruvate. Arg92 serves as a coordination point for UDP-N-acetyl-alpha-D-glucosamine. The active-site Proton donor is Cys116. At Cys116 the chain carries 2-(S-cysteinyl)pyruvic acid O-phosphothioketal. UDP-N-acetyl-alpha-D-glucosamine-binding positions include Arg121–Gln125, Asp306, and Ile328.

The protein belongs to the EPSP synthase family. MurA subfamily.

The protein localises to the cytoplasm. The catalysed reaction is phosphoenolpyruvate + UDP-N-acetyl-alpha-D-glucosamine = UDP-N-acetyl-3-O-(1-carboxyvinyl)-alpha-D-glucosamine + phosphate. It functions in the pathway cell wall biogenesis; peptidoglycan biosynthesis. Functionally, cell wall formation. Adds enolpyruvyl to UDP-N-acetylglucosamine. This Acinetobacter baylyi (strain ATCC 33305 / BD413 / ADP1) protein is UDP-N-acetylglucosamine 1-carboxyvinyltransferase.